A 312-amino-acid chain; its full sequence is Ribosomal RNA small subunit methyltransferase H (312 aa).

Residues 32 to 34, D52, F79, D100, and Q107 each bind S-adenosyl-L-methionine; that span reads AGH.

The protein belongs to the methyltransferase superfamily. RsmH family.

It is found in the cytoplasm. The enzyme catalyses cytidine(1402) in 16S rRNA + S-adenosyl-L-methionine = N(4)-methylcytidine(1402) in 16S rRNA + S-adenosyl-L-homocysteine + H(+). In terms of biological role, specifically methylates the N4 position of cytidine in position 1402 (C1402) of 16S rRNA. The chain is Ribosomal RNA small subunit methyltransferase H from Listeria monocytogenes serotype 4b (strain CLIP80459).